The sequence spans 200 residues: A-type ATP synthase subunit E (200 aa).

The protein belongs to the V-ATPase E subunit family. Has multiple subunits with at least A(3), B(3), C, D, E, F, H, I and proteolipid K(x).

The protein localises to the cell membrane. Functionally, component of the A-type ATP synthase that produces ATP from ADP in the presence of a proton gradient across the membrane. This Methanopyrus kandleri (strain AV19 / DSM 6324 / JCM 9639 / NBRC 100938) protein is A-type ATP synthase subunit E.